The following is an 847-amino-acid chain: Leucine--tRNA ligase (847 aa).

A 'HIGH' region motif is present at residues 41–51 (PYPSGRIHMGH). A 'KMSKS' region motif is present at residues 619–623 (KMSKS). Lys-622 is an ATP binding site.

The protein belongs to the class-I aminoacyl-tRNA synthetase family.

Its subcellular location is the cytoplasm. It carries out the reaction tRNA(Leu) + L-leucine + ATP = L-leucyl-tRNA(Leu) + AMP + diphosphate. This chain is Leucine--tRNA ligase, found in Cereibacter sphaeroides (strain ATCC 17023 / DSM 158 / JCM 6121 / CCUG 31486 / LMG 2827 / NBRC 12203 / NCIMB 8253 / ATH 2.4.1.) (Rhodobacter sphaeroides).